A 37-amino-acid polypeptide reads, in one-letter code: Large ribosomal subunit protein bL36 (37 aa).

It belongs to the bacterial ribosomal protein bL36 family.

The polypeptide is Large ribosomal subunit protein bL36 (Azoarcus sp. (strain BH72)).